A 263-amino-acid chain; its full sequence is Endonuclease 8 (263 aa).

Catalysis depends on Pro2, which acts as the Schiff-base intermediate with DNA. The active-site Proton donor is Glu3. Lys53 acts as the Proton donor; for beta-elimination activity in catalysis. The DNA site is built by Gln70, Arg125, and Asn169. The segment at 229 to 263 (KVFHRDGEPCERCGGIIEKTTLSSRPFYWCPGCQH) adopts an FPG-type zinc-finger fold. Arg253 acts as the Proton donor; for delta-elimination activity in catalysis.

Belongs to the FPG family. It depends on Zn(2+) as a cofactor.

The enzyme catalyses 2'-deoxyribonucleotide-(2'-deoxyribose 5'-phosphate)-2'-deoxyribonucleotide-DNA = a 3'-end 2'-deoxyribonucleotide-(2,3-dehydro-2,3-deoxyribose 5'-phosphate)-DNA + a 5'-end 5'-phospho-2'-deoxyribonucleoside-DNA + H(+). Functionally, involved in base excision repair of DNA damaged by oxidation or by mutagenic agents. Acts as a DNA glycosylase that recognizes and removes damaged bases. Has a preference for oxidized pyrimidines, such as thymine glycol, 5,6-dihydrouracil and 5,6-dihydrothymine. Has AP (apurinic/apyrimidinic) lyase activity and introduces nicks in the DNA strand. Cleaves the DNA backbone by beta-delta elimination to generate a single-strand break at the site of the removed base with both 3'- and 5'-phosphates. The protein is Endonuclease 8 of Escherichia coli O6:K15:H31 (strain 536 / UPEC).